The chain runs to 482 residues: tRNA sulfurtransferase (482 aa).

The THUMP domain maps to 61-165 (LAIRDALTRI…DDRLLLIKGR (105 aa)). ATP is bound by residues 183 to 184 (LI), lysine 265, glycine 287, and glutamine 296. Cysteines 344 and 456 form a disulfide. The Rhodanese domain maps to 404 to 482 (FGPNDVILDI…GFNNVKVYRP (79 aa)). Cysteine 456 (cysteine persulfide intermediate) is an active-site residue.

It belongs to the ThiI family.

The protein localises to the cytoplasm. It carries out the reaction [ThiI sulfur-carrier protein]-S-sulfanyl-L-cysteine + a uridine in tRNA + 2 reduced [2Fe-2S]-[ferredoxin] + ATP + H(+) = [ThiI sulfur-carrier protein]-L-cysteine + a 4-thiouridine in tRNA + 2 oxidized [2Fe-2S]-[ferredoxin] + AMP + diphosphate. The catalysed reaction is [ThiS sulfur-carrier protein]-C-terminal Gly-Gly-AMP + S-sulfanyl-L-cysteinyl-[cysteine desulfurase] + AH2 = [ThiS sulfur-carrier protein]-C-terminal-Gly-aminoethanethioate + L-cysteinyl-[cysteine desulfurase] + A + AMP + 2 H(+). It functions in the pathway cofactor biosynthesis; thiamine diphosphate biosynthesis. Its function is as follows. Catalyzes the ATP-dependent transfer of a sulfur to tRNA to produce 4-thiouridine in position 8 of tRNAs, which functions as a near-UV photosensor. Also catalyzes the transfer of sulfur to the sulfur carrier protein ThiS, forming ThiS-thiocarboxylate. This is a step in the synthesis of thiazole, in the thiamine biosynthesis pathway. The sulfur is donated as persulfide by IscS. This is tRNA sulfurtransferase from Escherichia coli O45:K1 (strain S88 / ExPEC).